Here is a 1017-residue protein sequence, read N- to C-terminus: MARLQFQLKVDGLEDESLVVRGFEGQESLSDSVWRCEPCYGFRYQVDLASALSNLTAEQFVDQTAHLTILRDGQVVQQINGIVRQLSKGDTGHRHTFYSLTLVPALERLSLRSNSRIFQQQSVPEIISILLQEMGIEDYAFALKRECAQREFCVQYRETDLQFLHRIAAEEGLVYSHLHEAQKHTLLFTDSSDSQPKLAKPVPYNALAGGEINLPYVVDLQFKTTAQVSHTELKDYSFKKPAYGFTQRTQGKDIAYQQPNYEHFDAPGRYKDDANGKAFSQIRLEYLRRDALLADAKSDEPLLLAGVRFDLQDHLDHAMNRDWLVVQANHQGTQPQALQEEGGSGATTYSNQLKLIPAHITWRARPCAKPQVDGPMIATVVGPQGEEIYCDNFGRVKVHFPWDRYSSSNEKSSCWVRVAQEWAGSQYGSMAIPRVGHEVIVSFLNGDPDQPIITGRTYHATNTAPYALPDHKTKTVLRTETHQGQGYNELSFEDQAGSEQILLHAQKDWDALIEHDHTEVIRHDQHLTVDNDRFTRIQRNQHLTVEGEVRSKIALDSSHEVGASLQHKVGQRIAVEAGKEISLKSGAKIVVEAGAELTLKAGGSFVKVDAGGVHLVGPAINLNAGGSAGSGSAYGGQLAAAPRMLAQAKPVAELVQPDIAASMQSGAARVIDVASLPTMMPSSANNTANDEPVAEEKTPERILKSDLLKPSDELEKLAKRQASAYRQGNHSDEVKLLQEALIKLGFDLGKAGADGDFGSKTKTAIEQFQKSYQPSHQTHPSYSIGAVDGIVGKGTLLALDEALMDGWVYENNIYQIWPLGKTSEKYESAGRGPGVISTGNGDYGGASYGCYQMSSNLGVVQKYIQSSKFKEFFSGLNPATKEFNVVWQDIASRYPQEFREEQHQFIKRTHYDIQIGHLRGKGLLFEHNRAAVHDLIWSTSVQFGGRTNLIFNALNGQNMESMTDKDIIILVQDYKLVNTERLFKSSPSWWSDLKKRAVSEKKALLELEIDGLEVDIK.

Asp842 is an active-site residue.

The protein belongs to the VgrG protein family. In terms of assembly, interacts with TsiV3. Interacts with TseL.

It localises to the secreted. In terms of biological role, part of the type VI secretion system specialized secretion system, which delivers several virulence factors in both prokaryotic and eukaryotic cells during infection. Forms the spike at the tip of the elongating tube formed by haemolysin co-regulated protein Hcp. Allows the delivery of the TseL antibacterial toxin to target cells where it exerts its toxicity. Additionally, acts directly as an effector and targets the cell wall peptidoglycan layer of prey cells for degradation via its C-terminus. Toxicity is counteracted by a cognate immunity protein TsiV3. This chain is Type VI secretion system spike protein VgrG3, found in Vibrio cholerae serotype O1 (strain ATCC 39315 / El Tor Inaba N16961).